The sequence spans 218 residues: N-(5'-phosphoribosyl)anthranilate isomerase (218 aa).

This sequence belongs to the TrpF family.

The catalysed reaction is N-(5-phospho-beta-D-ribosyl)anthranilate = 1-(2-carboxyphenylamino)-1-deoxy-D-ribulose 5-phosphate. It participates in amino-acid biosynthesis; L-tryptophan biosynthesis; L-tryptophan from chorismate: step 3/5. The chain is N-(5'-phosphoribosyl)anthranilate isomerase from Rhodopseudomonas palustris (strain BisB5).